The sequence spans 206 residues: Small ribosomal subunit protein uS4 (206 aa).

One can recognise an S4 RNA-binding domain in the interval 96–157 (SRLDNVVYRM…KAKNQARIQN (62 aa)).

The protein belongs to the universal ribosomal protein uS4 family. As to quaternary structure, part of the 30S ribosomal subunit. Contacts protein S5. The interaction surface between S4 and S5 is involved in control of translational fidelity.

In terms of biological role, one of the primary rRNA binding proteins, it binds directly to 16S rRNA where it nucleates assembly of the body of the 30S subunit. Functionally, with S5 and S12 plays an important role in translational accuracy. This chain is Small ribosomal subunit protein uS4, found in Chromohalobacter salexigens (strain ATCC BAA-138 / DSM 3043 / CIP 106854 / NCIMB 13768 / 1H11).